We begin with the raw amino-acid sequence, 320 residues long: Beta-ketoacyl-[acyl-carrier-protein] synthase III (320 aa).

Residues cysteine 114 and histidine 247 contribute to the active site. Residues 248–252 (QANRR) are ACP-binding. Residue asparagine 277 is part of the active site.

The protein belongs to the thiolase-like superfamily. FabH family. Homodimer.

Its subcellular location is the cytoplasm. It carries out the reaction malonyl-[ACP] + acetyl-CoA + H(+) = 3-oxobutanoyl-[ACP] + CO2 + CoA. It functions in the pathway lipid metabolism; fatty acid biosynthesis. In terms of biological role, catalyzes the condensation reaction of fatty acid synthesis by the addition to an acyl acceptor of two carbons from malonyl-ACP. Catalyzes the first condensation reaction which initiates fatty acid synthesis and may therefore play a role in governing the total rate of fatty acid production. Possesses both acetoacetyl-ACP synthase and acetyl transacylase activities. Its substrate specificity determines the biosynthesis of branched-chain and/or straight-chain of fatty acids. This is Beta-ketoacyl-[acyl-carrier-protein] synthase III from Neisseria meningitidis serogroup C (strain 053442).